The chain runs to 253 residues: RBPJ-interacting and tubulin-associated protein 1 (253 aa).

Disordered stretches follow at residues 30–89 (SPAR…KNKY), 127–175 (TPPA…LCVP), and 188–253 (HLTV…PPWK). The span at 71–81 (SPSSRGSTPNL) shows a compositional bias: polar residues. The Nuclear localization signal motif lies at 81–97 (LTPRKKNKYRLIGHAPS). Residues 112 to 140 (RMAVGDAAKLRTLFWTPPATPRGSHTPCP) form an interaction with RBPJ/RBPSUH region. The interval 140 to 253 (PRETPLRAIH…CPPKPKPPWK (114 aa)) is interaction with tubulin. Positions 188-228 (HLTVPSTGHPASSAPQTNGPWSPRPNTSGATVQSPLVTSKA) are enriched in polar residues.

Belongs to the RITA family. As to quaternary structure, interacts with RBPJ/RBPSUH.

It is found in the cytoplasm. Its subcellular location is the nucleus. The protein localises to the cytoskeleton. It localises to the microtubule organizing center. The protein resides in the centrosome. In terms of biological role, tubulin-binding protein that acts as a negative regulator of Notch signaling pathway. Shuttles between the cytoplasm and the nucleus and mediates the nuclear export of RBPJ/RBPSUH, thereby preventing the interaction between RBPJ/RBPSUH and NICD product of Notch proteins (Notch intracellular domain), leading to down-regulate Notch-mediated transcription. May play a role in neurogenesis. The chain is RBPJ-interacting and tubulin-associated protein 1 (Rita1) from Mus musculus (Mouse).